We begin with the raw amino-acid sequence, 537 residues long: O-phosphoserine--tRNA(Cys) ligase (537 aa).

Residues 186–188 (HMT), 231–233 (SAS), 273–274 (YY), and Asn317 each bind substrate.

This sequence belongs to the class-II aminoacyl-tRNA synthetase family. O-phosphoseryl-tRNA(Cys) synthetase subfamily. In terms of assembly, homotetramer. Interacts with SepCysS.

The enzyme catalyses tRNA(Cys) + O-phospho-L-serine + ATP = O-phospho-L-seryl-tRNA(Cys) + AMP + diphosphate. In terms of biological role, catalyzes the attachment of O-phosphoserine (Sep) to tRNA(Cys). The polypeptide is O-phosphoserine--tRNA(Cys) ligase (Methanococcus maripaludis (strain DSM 14266 / JCM 13030 / NBRC 101832 / S2 / LL)).